A 284-amino-acid chain; its full sequence is Tropomyosin (284 aa).

Positions 1–284 (MDAIKKKMQA…DMTFTELIGN (284 aa)) form a coiled coil.

This sequence belongs to the tropomyosin family. In terms of assembly, homodimer.

Tropomyosin, in association with the troponin complex, plays a central role in the calcium dependent regulation of muscle contraction. This Periplaneta fuliginosa (Smokybrown cockroach) protein is Tropomyosin.